A 605-amino-acid polypeptide reads, in one-letter code: Condensin-2 complex subunit H2 (605 aa).

Phosphothreonine is present on T19. Residues S95, S200, S208, S228, and S232 each carry the phosphoserine modification. The interval 194-331 is disordered; the sequence is LEPEGMSPME…PFDSLESKPF (138 aa). Over residues 256-266 the composition is skewed to acidic residues; it reads GEDEDAEEAVE. 4 positions are modified to phosphoserine: S282, S284, S466, and S492.

This sequence belongs to the CND2 H2 (condensin-2 subunit 2) family. In terms of assembly, component of the condensin-2 complex, which contains the SMC2 and SMC4 heterodimer, and three non SMC subunits, NCAPG2, NCAPH2 and NCAPD3 that probably regulate the complex.

Its subcellular location is the nucleus. The protein resides in the chromosome. In terms of biological role, regulatory subunit of the condensin-2 complex, a complex that seems to provide chromosomes with an additional level of organization and rigidity and in establishing mitotic chromosome architecture. May promote the resolution of double-strand DNA catenanes (intertwines) between sister chromatids. Condensin-mediated compaction likely increases tension in catenated sister chromatids, providing directionality for type II topoisomerase-mediated strand exchanges toward chromatid decatenation. Required for decatenation of chromatin bridges at anaphase. Early in neurogenesis, may play an essential role to ensure accurate mitotic chromosome condensation in neuron stem cells, ultimately affecting neuron pool and cortex size. Seems to have lineage-specific role in T-cell development. The polypeptide is Condensin-2 complex subunit H2 (NCAPH2) (Homo sapiens (Human)).